The sequence spans 239 residues: 6-phosphogluconolactonase (239 aa).

Belongs to the glucosamine/galactosamine-6-phosphate isomerase family. 6-phosphogluconolactonase subfamily.

It catalyses the reaction 6-phospho-D-glucono-1,5-lactone + H2O = 6-phospho-D-gluconate + H(+). Its pathway is carbohydrate degradation; pentose phosphate pathway; D-ribulose 5-phosphate from D-glucose 6-phosphate (oxidative stage): step 2/3. Its function is as follows. Hydrolysis of 6-phosphogluconolactone to 6-phosphogluconate. In Xylella fastidiosa (strain Temecula1 / ATCC 700964), this protein is 6-phosphogluconolactonase (pgl).